The chain runs to 246 residues: Uridylate kinase (246 aa).

16 to 19 (KLGG) is a binding site for ATP. G57 contributes to the UMP binding site. Residues G58 and R62 each contribute to the ATP site. UMP is bound by residues D77 and 138–145 (MGMPYFST). 2 residues coordinate ATP: Y171 and D174.

It belongs to the UMP kinase family. As to quaternary structure, homohexamer.

It is found in the cytoplasm. The enzyme catalyses UMP + ATP = UDP + ADP. It functions in the pathway pyrimidine metabolism; CTP biosynthesis via de novo pathway; UDP from UMP (UMPK route): step 1/1. With respect to regulation, inhibited by UTP. In terms of biological role, catalyzes the reversible phosphorylation of UMP to UDP. In Corynebacterium jeikeium (strain K411), this protein is Uridylate kinase.